Reading from the N-terminus, the 883-residue chain is Alanine--tRNA ligase (883 aa).

Zn(2+)-binding residues include H565, H569, C675, and H679.

This sequence belongs to the class-II aminoacyl-tRNA synthetase family. It depends on Zn(2+) as a cofactor.

It localises to the cytoplasm. The enzyme catalyses tRNA(Ala) + L-alanine + ATP = L-alanyl-tRNA(Ala) + AMP + diphosphate. In terms of biological role, catalyzes the attachment of alanine to tRNA(Ala) in a two-step reaction: alanine is first activated by ATP to form Ala-AMP and then transferred to the acceptor end of tRNA(Ala). Also edits incorrectly charged Ser-tRNA(Ala) and Gly-tRNA(Ala) via its editing domain. The polypeptide is Alanine--tRNA ligase (Rhodospirillum rubrum (strain ATCC 11170 / ATH 1.1.1 / DSM 467 / LMG 4362 / NCIMB 8255 / S1)).